A 1330-amino-acid chain; its full sequence is Ubinuclein-2 (1330 aa).

The disordered stretch occupies residues 1 to 113; sequence MAEPRRVAFI…PPPRPPKETV (113 aa). The residue at position 13 (Ser13) is a Phosphoserine. 2 stretches are compositionally biased toward basic and acidic residues: residues 16-31 and 55-67; these read RRRE…EPPR and ARDK…EVSR. Residues 81-96 show a composition bias toward pro residues; the sequence is PEPPPPPLPLQTPPPR. A Phosphothreonine modification is found at Thr229. Ser236 is modified (phosphoserine). Disordered stretches follow at residues 236 to 304 and 322 to 345; these read SDTE…KKRY and DALK…PKPP. Thr238 carries the phosphothreonine modification. Lys258 is covalently cross-linked (Glycyl lysine isopeptide (Lys-Gly) (interchain with G-Cter in SUMO2)). Residue Ser297 is modified to Phosphoserine. Phosphoserine is present on residues Ser402, Ser405, Ser408, and Ser570. Disordered regions lie at residues 559–583, 767–789, 801–835, 866–909, 964–991, 1021–1202, and 1292–1330; these read LQAD…KRVI, NKGP…GLRE, LATP…DLAH, GLQR…SLTQ, YRLP…APST, PKLA…SSVV, and PGTQ…RKPQ. A compositionally biased stretch (basic and acidic residues) spans 560-570; sequence QADEEREKNGS. Composition is skewed to polar residues over residues 767 to 780 and 809 to 818; these read NKGP…NVPT and SPQTAHSSSL. Over residues 866 to 895 the composition is skewed to low complexity; the sequence is GLQRSSQIHASSSQTHVSSSQAQAAASSHA. Composition is skewed to polar residues over residues 899 to 909 and 969 to 980; these read SEAQDASSLTQ and STPSPGNGSQGS. Pro residues predominate over residues 1030 to 1044; that stretch reads ATSPKPLTSPKPSVS. Positions 1045 to 1056 are enriched in low complexity; it reads PKPSLSAKPSVS. Lys1052 carries the N6-acetyllysine modification. 3 stretches are compositionally biased toward polar residues: residues 1073–1148, 1158–1169, and 1308–1317; these read PSSS…NSLS, RGSNLNSSGANR, and HLQQAFNDGG. A Phosphoserine modification is found at Ser1107. N6-acetyllysine is present on Lys1132. Positions 1321 to 1330 are enriched in basic and acidic residues; it reads GDTKLPRKPQ.

It belongs to the ubinuclein family.

The sequence is that of Ubinuclein-2 (Ubn2) from Rattus norvegicus (Rat).